Reading from the N-terminus, the 517-residue chain is Ubiquitin carboxyl-terminal hydrolase 30 (517 aa).

The Mitochondrial intermembrane segment spans residues 1-35; that stretch reads MLSSRAQAARTAADKALQRFLRTGAAVRYKVMKNW. Residues 36 to 56 traverse the membrane as a helical segment; sequence GVIGGIAAALAAGIYVIWGPI. Topologically, residues 57 to 517 are cytoplasmic; the sequence is TERKKRRKGL…QQGREYRSEE (461 aa). The USP domain occupies 68–502; that stretch reads PGLVNLGNTC…SAYLLFYERV (435 aa). The active-site Nucleophile is the cysteine 77. Positions 198 to 221 are disordered; it reads MAPRQVTCHTRGSPHPTTNHWKSQ. A compositionally biased stretch (polar residues) spans 204–218; sequence TCHTRGSPHPTTNHW. Glycyl lysine isopeptide (Lys-Gly) (interchain with G-Cter in ubiquitin) cross-links involve residues lysine 235 and lysine 289. Positions 364–395 are disordered; that stretch reads SQHGPKATENPGSAPEVQDAQAAPKPGLSQPG. Residue histidine 452 is the Proton acceptor of the active site.

It belongs to the peptidase C19 family. Post-translationally, ubiquitinated by parkin (PRKN) at Lys-235 and Lys-289, leading to its degradation.

It is found in the mitochondrion outer membrane. It catalyses the reaction Thiol-dependent hydrolysis of ester, thioester, amide, peptide and isopeptide bonds formed by the C-terminal Gly of ubiquitin (a 76-residue protein attached to proteins as an intracellular targeting signal).. Inhibited by the diterpenoid derivative 15-oxospiramilactone (S3). In terms of biological role, deubiquitinating enzyme tethered to the mitochondrial outer membrane that acts as a key inhibitor of mitophagy by counteracting the action of parkin (PRKN): hydrolyzes ubiquitin attached by parkin on target proteins, such as RHOT1/MIRO1 and TOMM20, thereby blocking parkin's ability to drive mitophagy. Preferentially cleaves 'Lys-6'- and 'Lys-11'-linked polyubiquitin chains, 2 types of linkage that participate in mitophagic signaling. Does not cleave efficiently polyubiquitin phosphorylated at 'Ser-65'. Acts as negative regulator of mitochondrial fusion by mediating deubiquitination of MFN1 and MFN2. The sequence is that of Ubiquitin carboxyl-terminal hydrolase 30 (Usp30) from Mus musculus (Mouse).